We begin with the raw amino-acid sequence, 189 residues long: MKAPNMETITESLEKSMMNCSLNDRRRRVVGDGFGRSSSNEHMTPISDRTLELNSHLSLPCHWEQCLDLKTGEIYYINWKNGMRVKEDPRKVMNADPDSGDSYGTVCSEEDSSYYDSEESSSESSPSSRENHKEEEEEEEEEEEEEEDVLVVAGCKACFMYFMVPKLVEDCPKCAAQLLHFDRPHSASS.

The EAR motif lies at 50 to 55 (TLELNS). The region spanning 57 to 91 (LSLPCHWEQCLDLKTGEIYYINWKNGMRVKEDPRK) is the WW domain. The disordered stretch occupies residues 90-148 (RKVMNADPDSGDSYGTVCSEEDSSYYDSEESSSESSPSSRENHKEEEEEEEEEEEEEED). Acidic residues-rich tracts occupy residues 108–121 (SEEDSSYYDSEESS) and 135–148 (EEEEEEEEEEEEED).

Interacts with BHLH122/CFLAP1 and BHLH80/CFLAP2. Binds to HDG1. As to expression, mostly observed in roots, flowers and siliques. Expressed in cells differentiated from epidermal cells such as trichomes, stigmatic papillar cells and guard cells, as well as in tissues undergoing abscission and dehiscence.

Negatively regulates the cuticle development by interacting with the HD-ZIP IV transcription factor HDG1. In Arabidopsis thaliana (Mouse-ear cress), this protein is Protein CURLY FLAG LEAF 1.